Consider the following 318-residue polypeptide: Basic leucine zipper (bZIP) transcription factor atfB (318 aa).

Disordered regions lie at residues 79–100 and 114–164; these read LKNTHVRNGQPTPPPFDDKKLQ and FNSS…EKRE. The basic motif stretch occupies residues 160-199; it reads REKREKFLERNRLAASKCRQKKKEHTKLLETRFREVSSKK. The bZIP domain occupies 160 to 223; sequence REKREKFLER…LNLKNEMLRH (64 aa). A leucine-zipper region spans residues 202-216; the sequence is LESEIEHLRSEVLNL. The disordered stretch occupies residues 247-304; that stretch reads TPNRDLVSPMRSPEQMTASTPHGLSFGFDGPMQLPSEMGSPLDQRRDSEQSIMTESSY.

It belongs to the bZIP family. ATF subfamily.

It is found in the nucleus. In terms of biological role, transcription factor that acts as a key player in the regulatory circuit that integrates secondary metabolism and cellular response to oxidative stress. Regulates the genes involved in development, stress response, and secondary metabolism through direct binding to their promoters. Particularly involved in the resistance to oxidative stress in asexual conidiospores. Binds aflatoxin gene promoters carrying the cAMP-response element (CRE1) under aflatoxin-inducing conditions. This Aspergillus parasiticus (strain ATCC 56775 / NRRL 5862 / SRRC 143 / SU-1) protein is Basic leucine zipper (bZIP) transcription factor atfB.